Consider the following 435-residue polypeptide: 3-phosphoshikimate 1-carboxyvinyltransferase (435 aa).

3 residues coordinate 3-phosphoshikimate: lysine 22, serine 23, and arginine 27. Lysine 22 is a binding site for phosphoenolpyruvate. Residues glycine 95 and arginine 123 each contribute to the phosphoenolpyruvate site. Positions 168, 170, 319, and 346 each coordinate 3-phosphoshikimate. Glutamine 170 is a binding site for phosphoenolpyruvate. The active-site Proton acceptor is the aspartate 319. Residues arginine 350 and arginine 393 each coordinate phosphoenolpyruvate.

The protein belongs to the EPSP synthase family. As to quaternary structure, monomer.

The protein resides in the cytoplasm. The enzyme catalyses 3-phosphoshikimate + phosphoenolpyruvate = 5-O-(1-carboxyvinyl)-3-phosphoshikimate + phosphate. Its pathway is metabolic intermediate biosynthesis; chorismate biosynthesis; chorismate from D-erythrose 4-phosphate and phosphoenolpyruvate: step 6/7. Its function is as follows. Catalyzes the transfer of the enolpyruvyl moiety of phosphoenolpyruvate (PEP) to the 5-hydroxyl of shikimate-3-phosphate (S3P) to produce enolpyruvyl shikimate-3-phosphate and inorganic phosphate. This chain is 3-phosphoshikimate 1-carboxyvinyltransferase, found in Chloroflexus aggregans (strain MD-66 / DSM 9485).